The primary structure comprises 354 residues: Carbamoyl phosphate synthase arginine-specific small chain (354 aa).

A CPSase region spans residues 1 to 163 (MKAYLHVASG…RTIETYGEGG (163 aa)). L-glutamine contacts are provided by serine 46, glycine 213, and glycine 215. Residues 165–352 (HLVLVDFGYK…LQTVFKGENV (188 aa)) enclose the Glutamine amidotransferase type-1 domain. Residue cysteine 240 is the Nucleophile of the active site. Positions 241, 244, 282, and 285 each coordinate L-glutamine. Residues histidine 325 and glutamate 327 contribute to the active site.

This sequence belongs to the CarA family. As to quaternary structure, composed of two chains; the small (or glutamine) chain promotes the hydrolysis of glutamine to ammonia, which is used by the large (or ammonia) chain to synthesize carbamoyl phosphate. Tetramer of heterodimers (alpha,beta)4.

It carries out the reaction hydrogencarbonate + L-glutamine + 2 ATP + H2O = carbamoyl phosphate + L-glutamate + 2 ADP + phosphate + 2 H(+). The catalysed reaction is L-glutamine + H2O = L-glutamate + NH4(+). It participates in amino-acid biosynthesis; L-arginine biosynthesis; carbamoyl phosphate from bicarbonate: step 1/1. Small subunit of the glutamine-dependent carbamoyl phosphate synthetase (CPSase). CPSase catalyzes the formation of carbamoyl phosphate from the ammonia moiety of glutamine, carbonate, and phosphate donated by ATP, constituting the first step of the biosynthetic pathway leading to arginine and/or urea. The small subunit (glutamine amidotransferase) binds and cleaves glutamine to supply the large subunit with the substrate ammonia. This is Carbamoyl phosphate synthase arginine-specific small chain from Geobacillus stearothermophilus (Bacillus stearothermophilus).